The primary structure comprises 434 residues: Nicotinate phosphoribosyltransferase (434 aa).

H242 carries the post-translational modification Phosphohistidine; by autocatalysis.

It belongs to the NAPRTase family. In terms of processing, transiently phosphorylated on a His residue during the reaction cycle. Phosphorylation strongly increases the affinity for substrates and increases the rate of nicotinate D-ribonucleotide production. Dephosphorylation regenerates the low-affinity form of the enzyme, leading to product release.

It carries out the reaction nicotinate + 5-phospho-alpha-D-ribose 1-diphosphate + ATP + H2O = nicotinate beta-D-ribonucleotide + ADP + phosphate + diphosphate. The protein operates within cofactor biosynthesis; NAD(+) biosynthesis; nicotinate D-ribonucleotide from nicotinate: step 1/1. Its function is as follows. Catalyzes the synthesis of beta-nicotinate D-ribonucleotide from nicotinate and 5-phospho-D-ribose 1-phosphate at the expense of ATP. The sequence is that of Nicotinate phosphoribosyltransferase from Sinorhizobium medicae (strain WSM419) (Ensifer medicae).